Here is a 234-residue protein sequence, read N- to C-terminus: UPF0758 protein Smlt0399 (234 aa).

The 123-residue stretch at 103-225 folds into the MPN domain; it reads VGNNPAAVGR…PVSFAERGLL (123 aa). The Zn(2+) site is built by histidine 174, histidine 176, and aspartate 187. The JAMM motif motif lies at 174 to 187; the sequence is HNHPSGDPEPSSAD.

The protein belongs to the UPF0758 family.

The protein is UPF0758 protein Smlt0399 of Stenotrophomonas maltophilia (strain K279a).